The primary structure comprises 291 residues: Elongation factor Ts (291 aa).

Residues 82–85 form an involved in Mg(2+) ion dislocation from EF-Tu region; the sequence is TDFC.

Belongs to the EF-Ts family.

Its subcellular location is the cytoplasm. Associates with the EF-Tu.GDP complex and induces the exchange of GDP to GTP. It remains bound to the aminoacyl-tRNA.EF-Tu.GTP complex up to the GTP hydrolysis stage on the ribosome. The protein is Elongation factor Ts of Methylobacillus flagellatus (strain ATCC 51484 / DSM 6875 / VKM B-1610 / KT).